The chain runs to 342 residues: tRNA N6-adenosine threonylcarbamoyltransferase (342 aa).

2 residues coordinate Fe cation: His-111 and His-115. Substrate contacts are provided by residues 133 to 137, Asp-166, Gly-179, Asp-183, and Asn-273; that span reads VVSGG. Position 301 (Asp-301) interacts with Fe cation.

The protein belongs to the KAE1 / TsaD family. Requires Fe(2+) as cofactor.

The protein resides in the cytoplasm. It catalyses the reaction L-threonylcarbamoyladenylate + adenosine(37) in tRNA = N(6)-L-threonylcarbamoyladenosine(37) in tRNA + AMP + H(+). Its function is as follows. Required for the formation of a threonylcarbamoyl group on adenosine at position 37 (t(6)A37) in tRNAs that read codons beginning with adenine. Is involved in the transfer of the threonylcarbamoyl moiety of threonylcarbamoyl-AMP (TC-AMP) to the N6 group of A37, together with TsaE and TsaB. TsaD likely plays a direct catalytic role in this reaction. This chain is tRNA N6-adenosine threonylcarbamoyltransferase, found in Trichlorobacter lovleyi (strain ATCC BAA-1151 / DSM 17278 / SZ) (Geobacter lovleyi).